The chain runs to 134 residues: L-ectoine synthase (134 aa).

The protein belongs to the ectoine synthase family.

The enzyme catalyses (2S)-4-acetamido-2-aminobutanoate = L-ectoine + H2O. The protein operates within amine and polyamine biosynthesis; ectoine biosynthesis; L-ectoine from L-aspartate 4-semialdehyde: step 3/3. In terms of biological role, catalyzes the circularization of gamma-N-acetyl-alpha,gamma-diaminobutyric acid (ADABA) to ectoine (1,4,5,6-tetrahydro-2-methyl-4-pyrimidine carboxylic acid), which is an excellent osmoprotectant. This chain is L-ectoine synthase, found in Shouchella clausii (strain KSM-K16) (Alkalihalobacillus clausii).